A 338-amino-acid polypeptide reads, in one-letter code: Mitochondrial glutathione transporter SLC25A40 (338 aa).

Solcar repeat units lie at residues 13–131, 139–223, and 233–327; these read VTPL…LSAL, NETC…LKKW, and PTFM…GKAF. A run of 6 helical transmembrane segments spans residues 19-39, 103-123, 142-162, 199-220, 239-259, and 298-318; these read MLASCTGAILTSVIVTPLDVV, LWSGLPPTLVMAVPATVIYFT, CIPIVAGIVARFGAVTVISPL, WAPTVLRDVPFSAMYWYNYEIL, FTSGALSGSFAAVATLPFDVV, and GLFSGLIPRLIKIAPACAIMI.

This sequence belongs to the mitochondrial carrier (TC 2.A.29) family.

The protein resides in the mitochondrion inner membrane. The enzyme catalyses glutathione(in) = glutathione(out). Probable mitochondrial transporter required for glutathione import into mitochondria. Glutathione, which plays key roles in oxidative metabolism, is produced exclusively in the cytosol and is imported in many organelles. Mitochondrial glutathione is required for the activity and stability of proteins containing iron-sulfur clusters, as well as erythropoiesis. In Homo sapiens (Human), this protein is Mitochondrial glutathione transporter SLC25A40.